The sequence spans 113 residues: Protein FPV195 (113 aa).

It belongs to the poxviruses A31 family.

This chain is Protein FPV195, found in Vertebrata (FPV).